The following is a 1013-amino-acid chain: MGLRGGGGRAGGPAPGWTCLLLCAALRSLLASPGSEVNLLDSRTVMGDLGWIAYPKNGWEEIGEVDENYAPIHTYQVCKVMEQNQNNWLLTSWISNEGRPASSFELKFTLRDCNSLPGGLGTCKETFNMYYFESDDEDGRNIRENQYIKIDTIAADESFTELDLGDRVMKLNTEVRDVGPLTKKGFYLAFQDVGACIALVSVRVYYKKCPSVIRNLARFPDTITGADSSQLLEVSGVCVNHSVTDEAPKMHCSAEGEWLVPIGKCLCKAGYEEKNNTCQVCRPGFFKASPHSPSCSKCPPHSYTLDEASTSCLCEEHYFRRESDPPTMACTRPPSAPRSAISNVNETSVFLEWIPPADTGGRKDVSYYIACKKCNSHSGLCEACGSHVRYLPQQTGLKNTSVMMVDLLAHTNYTFEIEAVNGVSDQNPGARQFVSVNVTTNQAAPSPVSSVKKGKITKNSISLSWQEPDRPNGIILEYEIKYFEKDQETSYTIIKSKETAITADGLKPGSAYVFQIRARTAAGYGGFSRRFEFETSPVLAASSDQSQIPIIVVSVTVGVILLAVVIGFLLSGSCCDHGCGWASSLRAVAYPSLIWRCGYSKAKQDPEEEKMHFHNGHIKLPGVRTYIDPHTYEDPNQAVHEFAKEIEASCITIERVIGAGEFGEVCSGRLKLQGKREFPVAIKTLKVGYTEKQRRDFLGEASIMGQFDHPNIIHLEGVVTKSKPVMIVTEYMENGSLDTFLKKNDGQFTVIQLVGMLRGIASGMKYLSDMGYVHRDLAARNILINSNLVCKVSDFGLSRVLEDDPEAAYTTRGGKIPIRWTAPEAIAFRKFTSASDVWSYGIVMWEVMSYGERPYWEMTNQDVIKAVEEGYRLPSPMDCPAALYQLMLDCWQKDRNSRPKFDEIVSMLDKLIRNPSSLKTLVNASSRVSNLLVEHSPVGSGAYRSVGEWLEAIKMGRYTEIFMENGYSSMDSVAQVTLEDLRRLGVTLVGHQKKIMNSLQEMKVQLVNGMVPL.

A signal peptide spans 1 to 31 (MGLRGGGGRAGGPAPGWTCLLLCAALRSLLA). The Extracellular segment spans residues 32–549 (SPGSEVNLLD…AASSDQSQIP (518 aa)). The region spanning 36–214 (EVNLLDSRTV…YYKKCPSVIR (179 aa)) is the Eph LBD domain. Asparagine 240, asparagine 275, asparagine 345, asparagine 399, asparagine 412, and asparagine 437 each carry an N-linked (GlcNAc...) asparagine glycan. Fibronectin type-III domains follow at residues 333–443 (PPSA…TNQA) and 444–538 (APSP…TSPV). Residues 550-570 (IIVVSVTVGVILLAVVIGFLL) form a helical membrane-spanning segment. At 571–1013 (SGSCCDHGCG…VQLVNGMVPL (443 aa)) the chain is on the cytoplasmic side. Phosphotyrosine; by autocatalysis is present on residues tyrosine 626 and tyrosine 632. In terms of domain architecture, Protein kinase spans 651–912 (ITIERVIGAG…EIVSMLDKLI (262 aa)). ATP contacts are provided by residues 657–665 (IGAGEFGEV) and lysine 683. The active-site Proton acceptor is aspartate 776. A phosphotyrosine; by autocatalysis mark is found at tyrosine 809 and tyrosine 958. Residues 941–1013 (GAYRSVGEWL…VQLVNGMVPL (73 aa)) form the SAM domain. Positions 1011–1013 (VPL) match the PDZ-binding motif.

It belongs to the protein kinase superfamily. Tyr protein kinase family. Ephrin receptor subfamily. In terms of assembly, heterotetramer upon binding of the ligand. The heterotetramer is composed of an ephrin dimer and a receptor dimer. Oligomerization is probably required to induce biological responses. Post-translationally, phosphorylated. Phosphorylation is stimulated by the ligand EFNA5. In terms of tissue distribution, detected in the 10-day embryonic brain, weaker expression in the rest of the 10-day embryo. Undetected in adult tissues.

Its subcellular location is the cell membrane. The protein resides in the cell projection. The protein localises to the axon. It is found in the dendrite. It carries out the reaction L-tyrosyl-[protein] + ATP = O-phospho-L-tyrosyl-[protein] + ADP + H(+). Functionally, receptor tyrosine kinase which binds promiscuously GPI-anchored ephrin-A family ligands residing on adjacent cells, leading to contact-dependent bidirectional signaling into neighboring cells. The signaling pathway downstream of the receptor is referred to as forward signaling while the signaling pathway downstream of the ephrin ligand is referred to as reverse signaling. Among GPI-anchored ephrin-A ligands, EFNA5 most probably constitutes the cognate/functional ligand for EPHA5. Functions as an axon guidance molecule during development and may be involved in the development of the retinotectal, entorhino-hippocampal and hippocamposeptal pathways. Together with EFNA5 plays also a role in synaptic plasticity in adult brain through regulation of synaptogenesis. The sequence is that of Ephrin type-A receptor 5 (EPHA5) from Gallus gallus (Chicken).